A 423-amino-acid chain; its full sequence is Adenylosuccinate synthetase (423 aa).

GTP-binding positions include 12-18 and 40-42; these read GDEGKGK and GHT. Residue aspartate 13 is the Proton acceptor of the active site. Positions 13 and 40 each coordinate Mg(2+). IMP is bound by residues 13–16, 38–41, threonine 129, arginine 143, glutamine 224, threonine 239, and arginine 303; these read DEGK and NAGH. Residue histidine 41 is the Proton donor of the active site. Residue 299-305 participates in substrate binding; it reads SVTGRQR. GTP-binding positions include arginine 305, 331–333, and 412–414; these read KGD and SVG.

Belongs to the adenylosuccinate synthetase family. As to quaternary structure, homodimer. It depends on Mg(2+) as a cofactor.

The protein localises to the cytoplasm. It catalyses the reaction IMP + L-aspartate + GTP = N(6)-(1,2-dicarboxyethyl)-AMP + GDP + phosphate + 2 H(+). Its pathway is purine metabolism; AMP biosynthesis via de novo pathway; AMP from IMP: step 1/2. Plays an important role in the de novo pathway of purine nucleotide biosynthesis. Catalyzes the first committed step in the biosynthesis of AMP from IMP. The polypeptide is Adenylosuccinate synthetase (Flavobacterium johnsoniae (strain ATCC 17061 / DSM 2064 / JCM 8514 / BCRC 14874 / CCUG 350202 / NBRC 14942 / NCIMB 11054 / UW101) (Cytophaga johnsonae)).